A 303-amino-acid polypeptide reads, in one-letter code: Recombination-associated protein RdgC (303 aa).

It belongs to the RdgC family.

The protein localises to the cytoplasm. The protein resides in the nucleoid. In terms of biological role, may be involved in recombination. This is Recombination-associated protein RdgC from Salmonella newport (strain SL254).